A 265-amino-acid polypeptide reads, in one-letter code: Undecaprenyl-diphosphatase (265 aa).

Helical transmembrane passes span I41–F61, L75–I95, Y104–I124, L137–V157, Y180–T200, G215–L235, and Y244–I264.

This sequence belongs to the UppP family.

The protein resides in the cell membrane. The catalysed reaction is di-trans,octa-cis-undecaprenyl diphosphate + H2O = di-trans,octa-cis-undecaprenyl phosphate + phosphate + H(+). Catalyzes the dephosphorylation of undecaprenyl diphosphate (UPP). This chain is Undecaprenyl-diphosphatase, found in Saccharolobus islandicus (strain Y.G.57.14 / Yellowstone #1) (Sulfolobus islandicus).